A 202-amino-acid polypeptide reads, in one-letter code: ATP-dependent Clp protease proteolytic subunit (202 aa).

The Nucleophile role is filled by Ser-106. His-131 is an active-site residue.

Belongs to the peptidase S14 family. Fourteen ClpP subunits assemble into 2 heptameric rings which stack back to back to give a disk-like structure with a central cavity, resembling the structure of eukaryotic proteasomes.

It is found in the cytoplasm. The enzyme catalyses Hydrolysis of proteins to small peptides in the presence of ATP and magnesium. alpha-casein is the usual test substrate. In the absence of ATP, only oligopeptides shorter than five residues are hydrolyzed (such as succinyl-Leu-Tyr-|-NHMec, and Leu-Tyr-Leu-|-Tyr-Trp, in which cleavage of the -Tyr-|-Leu- and -Tyr-|-Trp bonds also occurs).. Its function is as follows. Cleaves peptides in various proteins in a process that requires ATP hydrolysis. Has a chymotrypsin-like activity. Plays a major role in the degradation of misfolded proteins. The polypeptide is ATP-dependent Clp protease proteolytic subunit (Acidovorax ebreus (strain TPSY) (Diaphorobacter sp. (strain TPSY))).